The chain runs to 312 residues: Glyoxylate/hydroxypyruvate reductase A (312 aa).

The active site involves arginine 227. Histidine 275 serves as the catalytic Proton donor.

It belongs to the D-isomer specific 2-hydroxyacid dehydrogenase family. GhrA subfamily.

It localises to the cytoplasm. The enzyme catalyses glycolate + NADP(+) = glyoxylate + NADPH + H(+). It carries out the reaction (R)-glycerate + NAD(+) = 3-hydroxypyruvate + NADH + H(+). It catalyses the reaction (R)-glycerate + NADP(+) = 3-hydroxypyruvate + NADPH + H(+). Catalyzes the NADPH-dependent reduction of glyoxylate and hydroxypyruvate into glycolate and glycerate, respectively. The protein is Glyoxylate/hydroxypyruvate reductase A of Salmonella paratyphi C (strain RKS4594).